Here is a 383-residue protein sequence, read N- to C-terminus: tRNA-specific 2-thiouridylase MnmA (383 aa).

Residues G9–S16 and M35 contribute to the ATP site. Residues N95 to D97 form an interaction with target base in tRNA region. The active-site Nucleophile is the C100. An intrachain disulfide couples C100 to C196. Position 124 (G124) interacts with ATP. The tract at residues K146–Q148 is interaction with tRNA. Catalysis depends on C196, which acts as the Cysteine persulfide intermediate. Positions R308–Y309 are interaction with tRNA.

Belongs to the MnmA/TRMU family.

The protein localises to the cytoplasm. It catalyses the reaction S-sulfanyl-L-cysteinyl-[protein] + uridine(34) in tRNA + AH2 + ATP = 2-thiouridine(34) in tRNA + L-cysteinyl-[protein] + A + AMP + diphosphate + H(+). Functionally, catalyzes the 2-thiolation of uridine at the wobble position (U34) of tRNA, leading to the formation of s(2)U34. In Burkholderia pseudomallei (strain 668), this protein is tRNA-specific 2-thiouridylase MnmA.